We begin with the raw amino-acid sequence, 432 residues long: GRAM domain-containing protein 2B (432 aa).

N-acetylmethionine is present on Met1. 2 disordered regions span residues Met1–Gln61 and Asp74–Tyr106. Basic and acidic residues-rich tracts occupy residues Glu9–Lys39 and Asp81–Lys99. Positions Met110–Lys177 constitute a GRAM domain. Residues Thr220–Asn233 are compositionally biased toward polar residues. The interval Thr220–Arg239 is disordered. Ser225, Ser242, and Ser252 each carry phosphoserine. A disordered region spans residues Arg262–His285. A compositionally biased stretch (polar residues) spans Tyr268–Ser278.

The protein is GRAM domain-containing protein 2B (GRAMD2B) of Homo sapiens (Human).